The chain runs to 477 residues: ATP synthase subunit beta (477 aa).

148–155 is an ATP binding site; the sequence is GGAGVGKT.

This sequence belongs to the ATPase alpha/beta chains family. As to quaternary structure, F-type ATPases have 2 components, CF(1) - the catalytic core - and CF(0) - the membrane proton channel. CF(1) has five subunits: alpha(3), beta(3), gamma(1), delta(1), epsilon(1). CF(0) has three main subunits: a(1), b(2) and c(9-12). The alpha and beta chains form an alternating ring which encloses part of the gamma chain. CF(1) is attached to CF(0) by a central stalk formed by the gamma and epsilon chains, while a peripheral stalk is formed by the delta and b chains.

The protein resides in the cell inner membrane. It carries out the reaction ATP + H2O + 4 H(+)(in) = ADP + phosphate + 5 H(+)(out). In terms of biological role, produces ATP from ADP in the presence of a proton gradient across the membrane. The catalytic sites are hosted primarily by the beta subunits. In Psychrobacter arcticus (strain DSM 17307 / VKM B-2377 / 273-4), this protein is ATP synthase subunit beta.